A 420-amino-acid polypeptide reads, in one-letter code: ATP phosphoribosyltransferase regulatory subunit (420 aa).

It belongs to the class-II aminoacyl-tRNA synthetase family. HisZ subfamily. Heteromultimer composed of HisG and HisZ subunits.

The protein localises to the cytoplasm. Its pathway is amino-acid biosynthesis; L-histidine biosynthesis; L-histidine from 5-phospho-alpha-D-ribose 1-diphosphate: step 1/9. In terms of biological role, required for the first step of histidine biosynthesis. May allow the feedback regulation of ATP phosphoribosyltransferase activity by histidine. The chain is ATP phosphoribosyltransferase regulatory subunit from Bacillus thuringiensis (strain Al Hakam).